Consider the following 184-residue polypeptide: Large ribosomal subunit protein uL5 (184 aa).

It belongs to the universal ribosomal protein uL5 family. In terms of assembly, part of the 50S ribosomal subunit; part of the 5S rRNA/L5/L18/L25 subcomplex. Contacts the 5S rRNA and the P site tRNA. Forms a bridge to the 30S subunit in the 70S ribosome.

In terms of biological role, this is one of the proteins that bind and probably mediate the attachment of the 5S RNA into the large ribosomal subunit, where it forms part of the central protuberance. In the 70S ribosome it contacts protein S13 of the 30S subunit (bridge B1b), connecting the 2 subunits; this bridge is implicated in subunit movement. Contacts the P site tRNA; the 5S rRNA and some of its associated proteins might help stabilize positioning of ribosome-bound tRNAs. The sequence is that of Large ribosomal subunit protein uL5 from Thermotoga sp. (strain RQ2).